The chain runs to 503 residues: Probable folate-biopterin transporter 6 (503 aa).

The next 12 helical transmembrane spans lie at 56 to 76 (SFVL…GSIF), 101 to 121 (LYYI…VFPI), 128 to 148 (PYFV…VVLG), 153 to 173 (ALAL…DVVI), 194 to 214 (LCMV…GVFV), 221 to 241 (GALG…FFIY), 281 to 301 (LYMF…FYWY), 314 to 334 (FVGI…LIYH), 344 to 364 (NILF…LVFI), 369 to 389 (LTLG…TKMI), 404 to 424 (LCPL…DSFG), and 450 to 470 (WLVI…VFLV).

The protein belongs to the major facilitator superfamily. Folate-biopterin transporter (TC 2.A.71) family.

It localises to the membrane. In terms of biological role, could mediate folate transport. The chain is Probable folate-biopterin transporter 6 from Arabidopsis thaliana (Mouse-ear cress).